The chain runs to 817 residues: Protein-glutamine gamma-glutamyltransferase K (817 aa).

2 disordered regions span residues 1 to 38 (MMDG…SRRG) and 59 to 105 (DDWG…DGTI). The membrane anchorage region stretch occupies residues 1-100 (MMDGPRSDVG…VSRGSGVNAA (100 aa)). Pro residues predominate over residues 17 to 26 (LQPPTTPSPE). Thr-22 is subject to Phosphothreonine. Phosphoserine occurs at positions 24, 68, 82, 85, 92, and 95. Residues 71–84 (RGSSSGTRRPGSRG) are compositionally biased toward low complexity. Active-site residues include Cys-377, His-436, and Asp-459. Residues Asn-499, Asp-501, Glu-548, and Glu-553 each contribute to the Ca(2+) site. A disordered region spans residues 793-817 (GGFFSDAGGDSHLGETIPMASRGGA).

Belongs to the transglutaminase superfamily. Transglutaminase family. Interacts with PLAAT4. Ca(2+) is required as a cofactor. Post-translationally, palmitoylated. The membrane anchorage region possesses a cluster of five cysteines within which fatty acid(s) may become thioester-linked. It is subject to phorbol ester-stimulated phosphorylation and is hypersensitive to proteolysis, which releases the enzyme in a soluble form. In terms of processing, tyrosine-phosphorylated.

The protein resides in the membrane. The catalysed reaction is L-glutaminyl-[protein] + L-lysyl-[protein] = [protein]-L-lysyl-N(6)-5-L-glutamyl-[protein] + NH4(+). Catalyzes the cross-linking of proteins and the conjugation of polyamines to proteins. Responsible for cross-linking epidermal proteins during formation of the stratum corneum. Involved in cell proliferation. This chain is Protein-glutamine gamma-glutamyltransferase K (TGM1), found in Homo sapiens (Human).